Here is a 97-residue protein sequence, read N- to C-terminus: Cornifin (97 aa).

The interval 1–42 (MSSQQQKQPCTPPPQPQQQQVKQPCQPPPQEPCVPKTKEPCH) is disordered. The residue at position 2 (serine 2) is an N-acetylserine. 9 consecutive repeat copies span residues 3–14 (SQQQKQPCTPPP), 18–29 (QQQVKQPCQPPP), 31–38 (EPCVPKTK), 39–46 (EPCHPKVP), 47–54 (EPCQPKVP), 55–62 (EPCQPKVP), 63–70 (EPCHPKVP), 71–78 (EPCQPKVP), and 79–85 (EPCPSPV). The 2 X 12 AA approximate repeats stretch occupies residues 3–29 (SQQQKQPCTPPPQPQQQQVKQPCQPPP). The interval 31-85 (EPCVPKTKEPCHPKVPEPCQPKVPEPCQPKVPEPCHPKVPEPCQPKVPEPCPSPV) is 7 X 8 AA approximate tandem repeats.

The protein belongs to the cornifin (SPRR) family. As to expression, not detected in normal lung tissue but seen in tumor tissues. Cells around the keratin pearls contain high levels.

Its subcellular location is the cytoplasm. Its function is as follows. Cross-linked envelope protein of keratinocytes. It is a keratinocyte protein that first appears in the cell cytosol, but ultimately becomes cross-linked to membrane proteins by transglutaminase. All that results in the formation of an insoluble envelope beneath the plasma membrane. The sequence is that of Cornifin (SPRP) from Sus scrofa (Pig).